The following is a 322-amino-acid chain: Tubulin alpha-4 chain (322 aa).

S15, G19, T20, T54, N81, and N103 together coordinate GTP. E129 is a catalytic residue.

It belongs to the tubulin family. In terms of assembly, dimer of alpha and beta chains. A typical microtubule is a hollow water-filled tube with an outer diameter of 25 nm and an inner diameter of 15 nM. Alpha-beta heterodimers associate head-to-tail to form protofilaments running lengthwise along the microtubule wall with the beta-tubulin subunit facing the microtubule plus end conferring a structural polarity. Microtubules usually have 13 protofilaments but different protofilament numbers can be found in some organisms and specialized cells. The cofactor is Mg(2+). In terms of processing, some glutamate residues at the C-terminus are polyglycylated, resulting in polyglycine chains on the gamma-carboxyl group. Glycylation is mainly limited to tubulin incorporated into axonemes (cilia and flagella) whereas glutamylation is prevalent in neuronal cells, centrioles, axonemes, and the mitotic spindle. Both modifications can coexist on the same protein on adjacent residues, and lowering polyglycylation levels increases polyglutamylation, and reciprocally. The precise function of polyglycylation is still unclear. Some glutamate residues at the C-terminus are polyglutamylated, resulting in polyglutamate chains on the gamma-carboxyl group. Polyglutamylation plays a key role in microtubule severing by spastin (SPAST). SPAST preferentially recognizes and acts on microtubules decorated with short polyglutamate tails: severing activity by SPAST increases as the number of glutamates per tubulin rises from one to eight, but decreases beyond this glutamylation threshold.

It is found in the cytoplasm. The protein resides in the cytoskeleton. The enzyme catalyses GTP + H2O = GDP + phosphate + H(+). In terms of biological role, tubulin is the major constituent of microtubules, a cylinder consisting of laterally associated linear protofilaments composed of alpha- and beta-tubulin heterodimers. Microtubules grow by the addition of GTP-tubulin dimers to the microtubule end, where a stabilizing cap forms. Below the cap, tubulin dimers are in GDP-bound state, owing to GTPase activity of alpha-tubulin. This chain is Tubulin alpha-4 chain, found in Gallus gallus (Chicken).